Reading from the N-terminus, the 291-residue chain is Elongation factor Ts (291 aa).

The involved in Mg(2+) ion dislocation from EF-Tu stretch occupies residues 80–83 (TDFV).

The protein belongs to the EF-Ts family.

Its subcellular location is the cytoplasm. Its function is as follows. Associates with the EF-Tu.GDP complex and induces the exchange of GDP to GTP. It remains bound to the aminoacyl-tRNA.EF-Tu.GTP complex up to the GTP hydrolysis stage on the ribosome. This is Elongation factor Ts from Ligilactobacillus salivarius (strain UCC118) (Lactobacillus salivarius).